The following is a 266-amino-acid chain: Signal peptidase I (266 aa).

Residues 1 to 20 (MQTDNTKSNTNKTAKQEWWS) lie on the Cytoplasmic side of the membrane. A helical transmembrane segment spans residues 21 to 41 (CAFVICIALLIRILIMEPFTV). At 42 to 266 (PTGSMKATIL…IFRNLYNTDE (225 aa)) the chain is on the periplasmic side. Active-site residues include Ser-45 and Lys-108.

The protein belongs to the peptidase S26 family.

It is found in the cell inner membrane. The enzyme catalyses Cleavage of hydrophobic, N-terminal signal or leader sequences from secreted and periplasmic proteins.. The polypeptide is Signal peptidase I (lepB) (Rickettsia akari (strain Hartford)).